The chain runs to 161 residues: Peroxynitrite isomerase 2 (161 aa).

The GXWXGXG motif lies at Gly17 to Gly23. Position 152 (His152) interacts with heme b.

This sequence belongs to the nitrobindin family. In terms of assembly, homodimer. The cofactor is heme b.

It carries out the reaction peroxynitrite = nitrate. It participates in nitrogen metabolism. Its function is as follows. Heme-binding protein able to scavenge peroxynitrite and to protect free L-tyrosine against peroxynitrite-mediated nitration, by acting as a peroxynitrite isomerase that converts peroxynitrite to nitrate. Therefore, this protein likely plays a role in peroxynitrite sensing and in the detoxification of reactive nitrogen and oxygen species (RNS and ROS, respectively). Is able to bind nitric oxide (NO) in vitro, but may act as a sensor of peroxynitrite levels in vivo. This is Peroxynitrite isomerase 2 from Mycobacterium marinum (strain ATCC BAA-535 / M).